The following is a 526-amino-acid chain: Tyrosine 2,3-aminomutase (526 aa).

The active-site Proton donor/acceptor is the Tyr-41. His-71 is a substrate binding site. The 5-imidazolinone (Ala-Gly) cross-link spans 130–132 (ASG). Ser-131 carries the post-translational modification 2,3-didehydroalanine (Ser). Residues Asn-183 and Arg-288 each coordinate substrate.

This sequence belongs to the TAL/TAM family. In terms of assembly, homotetramer; dimer of dimers. Post-translationally, contains an active site 4-methylidene-imidazol-5-one (MIO), which is formed autocatalytically by cyclization and dehydration of residues Ala-Ser-Gly.

It carries out the reaction L-tyrosine = 3-amino-3-(4-hydroxyphenyl)propanoate. The enzyme catalyses L-tyrosine = (E)-4-coumarate + NH4(+). Functionally, has aminomutase and, to a much lesser extent, ammonia-lyase activity. Primarily, catalyzes the rearrangement of L-tyrosine to S-beta-tyrosine, which is probably incorporated into secondary metabolite myxovalargin. The aminomutase activity exclusively produces S-beta-tyrosine. The polypeptide is Tyrosine 2,3-aminomutase (Myxococcus fulvus).